Reading from the N-terminus, the 92-residue chain is Progonadoliberin-1 (92 aa).

An N-terminal signal peptide occupies residues 1–23 (MELVPKFLAGLILLTLCVGGCYA). The residue at position 24 (Gln24) is a Pyrrolidone carboxylic acid. Gly33 carries the glycine amide modification.

It belongs to the GnRH family.

It localises to the secreted. Its function is as follows. Stimulates the secretion of gonadotropins; it stimulates the secretion of both luteinizing and follicle-stimulating hormones. In Tupaia belangeri (Common tree shrew), this protein is Progonadoliberin-1 (GNRH1).